The chain runs to 459 residues: Cysteine--tRNA ligase (459 aa).

Position 29 (Cys-29) interacts with Zn(2+). The 'HIGH' region motif lies at 31–41 (MTVYDLCHLGH). Residues Cys-213, His-238, and Glu-242 each coordinate Zn(2+). Residues 270 to 274 (KMSKS) carry the 'KMSKS' region motif. ATP is bound at residue Lys-273.

This sequence belongs to the class-I aminoacyl-tRNA synthetase family. In terms of assembly, monomer. It depends on Zn(2+) as a cofactor.

Its subcellular location is the cytoplasm. The catalysed reaction is tRNA(Cys) + L-cysteine + ATP = L-cysteinyl-tRNA(Cys) + AMP + diphosphate. The sequence is that of Cysteine--tRNA ligase from Albidiferax ferrireducens (strain ATCC BAA-621 / DSM 15236 / T118) (Rhodoferax ferrireducens).